The sequence spans 71 residues: UPF0346 protein BcerKBAB4_2120 (71 aa).

This sequence belongs to the UPF0346 family.

The chain is UPF0346 protein BcerKBAB4_2120 from Bacillus mycoides (strain KBAB4) (Bacillus weihenstephanensis).